The chain runs to 535 residues: Estrogen receptor (535 aa).

A disordered region spans residues 1–21 (SRMLTDPPRIGSMQSLGSSPT). The modulating stretch occupies residues 1-104 (SRMLTDPPRI…VFEMANETRY (104 aa)). A compositionally biased stretch (polar residues) spans 12–21 (SMQSLGSSPT). 2 NR C4-type zinc fingers span residues 105 to 125 (CAVC…CEGC) and 141 to 165 (CPAT…LRKC). The segment at residues 105–170 (CAVCSDFASG…RLRKCYEVGM (66 aa)) is a DNA-binding region (nuclear receptor). Residues 171 to 236 (VKGGLRKDRG…GGWCGPRITM (66 aa)) form a hinge region. Residues 187–229 (DKRYCGPAGDREKPYGDLEHRTAPPQDGGRNSSSSSLSGGGGW) form a disordered region. Positions 195–208 (GDREKPYGDLEHRT) are enriched in basic and acidic residues. The segment covering 214 to 223 (GGRNSSSSSL) has biased composition (low complexity). One can recognise an NR LBD domain in the interval 237–473 (PPEQVLFLLQ…DLLLEMLDGH (237 aa)). The interval 478 to 535 (PGKVAQAGEQTEGPSTTTTTSTGSSIGPMRGSQDTHIRSPGSGVLQYGSPSSDQMPIP) is disordered. A compositionally biased stretch (low complexity) spans 492–502 (STTTTTSTGSS). Polar residues predominate over residues 525 to 535 (GSPSSDQMPIP).

The protein belongs to the nuclear hormone receptor family. NR3 subfamily. Binds DNA as a homodimer. Can form a heterodimer with ER-beta. As to expression, highest expression in brain and liver.

The protein resides in the nucleus. In terms of biological role, the steroid hormones and their receptors are involved in the regulation of eukaryotic gene expression and affect cellular proliferation and differentiation in target tissues. This chain is Estrogen receptor (esr1), found in Salmo salar (Atlantic salmon).